A 179-amino-acid chain; its full sequence is Small ribosomal subunit protein uS7 (179 aa).

Belongs to the universal ribosomal protein uS7 family. As to quaternary structure, part of the 30S ribosomal subunit. Contacts proteins S9 and S11. Cross-links to IF3 and the P and E site tRNAs.

Functionally, one of the primary rRNA binding proteins, it binds directly to 16S rRNA where it nucleates assembly of the head domain of the 30S subunit. Is located at the subunit interface close to the decoding center, where it has been shown to contact mRNA. Has been shown to contact tRNA in both the P and E sites; it probably blocks exit of the E site tRNA. Protein S7 is also a translational repressor protein; it regulates the expression of the str operon members to different degrees by binding to its mRNA. This is Small ribosomal subunit protein uS7 (rpsG) from Escherichia coli (strain K12).